The sequence spans 393 residues: Tryptophan synthase beta chain (393 aa).

The residue at position 86 (K86) is an N6-(pyridoxal phosphate)lysine.

The protein belongs to the TrpB family. As to quaternary structure, tetramer of two alpha and two beta chains. Pyridoxal 5'-phosphate is required as a cofactor.

It carries out the reaction (1S,2R)-1-C-(indol-3-yl)glycerol 3-phosphate + L-serine = D-glyceraldehyde 3-phosphate + L-tryptophan + H2O. It participates in amino-acid biosynthesis; L-tryptophan biosynthesis; L-tryptophan from chorismate: step 5/5. Its function is as follows. The beta subunit is responsible for the synthesis of L-tryptophan from indole and L-serine. This Alteromonas mediterranea (strain DSM 17117 / CIP 110805 / LMG 28347 / Deep ecotype) protein is Tryptophan synthase beta chain.